The following is a 54-amino-acid chain: Apelin receptor early endogenous ligand (54 aa).

A signal peptide spans 1 to 25 (MRFQPLFWVFFIFAMSLLFITEEKS).

This sequence belongs to the Elabela/Toddler family. Interacts with APLNR.

Its subcellular location is the secreted. It is found in the extracellular space. Functionally, peptide hormone that functions as endogenous ligand for the G-protein-coupled apelin receptor (APLNR/APJ), that plays a role in the regulation of normal cardiovascular function and fluid homeostasis. Functions as a balanced agonist activating both G(i) protein pathway and beta-arrestin pathway of APLNR. Downstream G proteins activation, apelin can inhibit cAMP production and activate key intracellular effectors such as ERKs. On the other hand, APLNR activation induces beta-arrestin recruitment to the membrane leading to desensitization and internalization of the receptor. Required for mesendodermal differentiation, blood vessels formation and heart morphogenesis during early development and for adult cardiovascular homeostasis. Acts as a motogen by promoting mesendodermal cell migration during gastrulation by binding and activating APLNR. Acts as an early embryonic regulator of cellular movement with a role in migration and development of cardiac progenitor cells. May act as a chemoattractant for the activation of angioblast migration toward the embryonic midline, i.e. the position of the future vessel formation, during vasculogenesis. Positively regulates sinus venosus (SV)-derived endothelial cells migration into the developing heart to promote coronary blood vessel sprouting. Plays a role in placental vascular development; promotes placental trophoblast invasion and spiral artery remodeling in the uterus. Involved in the regulation of maternal cardiovascular homeostasis to prevent gestational hypertension and for potent cardioprotective functions during heart failure. Mediates myocardial contractility in an ERK1/2-dependent manner. This chain is Apelin receptor early endogenous ligand, found in Rattus norvegicus (Rat).